Here is a 462-residue protein sequence, read N- to C-terminus: Major capsid protein (462 aa).

It belongs to the NCLDV major capsid protein family. Homotrimer.

The protein localises to the virion. In terms of biological role, major capsid protein that self assembles to form an icosahedral capsid. Represents around 50% of the total virion protein mass. In Costelytra zealandica (CzIV), this protein is Major capsid protein (MCP).